Reading from the N-terminus, the 196-residue chain is Phosphoheptose isomerase (196 aa).

The 160-residue stretch at 34–193 (LIETFKIGNK…EQGLFGIFAG (160 aa)) folds into the SIS domain. Residue 49-51 (NGG) participates in substrate binding. Zn(2+) contacts are provided by histidine 58 and glutamate 62. Residues glutamate 62, 91–92 (ND), 117–119 (STS), serine 122, and glutamine 169 contribute to the substrate site. Zn(2+) contacts are provided by glutamine 169 and histidine 177.

This sequence belongs to the SIS family. GmhA subfamily. Homotetramer. Zn(2+) is required as a cofactor.

Its subcellular location is the cytoplasm. The enzyme catalyses 2 D-sedoheptulose 7-phosphate = D-glycero-alpha-D-manno-heptose 7-phosphate + D-glycero-beta-D-manno-heptose 7-phosphate. Its pathway is carbohydrate biosynthesis; D-glycero-D-manno-heptose 7-phosphate biosynthesis; D-glycero-alpha-D-manno-heptose 7-phosphate and D-glycero-beta-D-manno-heptose 7-phosphate from sedoheptulose 7-phosphate: step 1/1. Its function is as follows. Catalyzes the isomerization of sedoheptulose 7-phosphate in D-glycero-D-manno-heptose 7-phosphate. This Trichlorobacter lovleyi (strain ATCC BAA-1151 / DSM 17278 / SZ) (Geobacter lovleyi) protein is Phosphoheptose isomerase.